Here is a 262-residue protein sequence, read N- to C-terminus: Acetaldehyde dehydrogenase 7 (262 aa).

Ser-10–Ile-13 is an NAD(+) binding site. Residue Cys-128 is the Acyl-thioester intermediate of the active site. Ser-159 to Asn-167 contacts NAD(+).

It belongs to the acetaldehyde dehydrogenase family.

It catalyses the reaction acetaldehyde + NAD(+) + CoA = acetyl-CoA + NADH + H(+). The sequence is that of Acetaldehyde dehydrogenase 7 from Rhodococcus jostii (strain RHA1).